We begin with the raw amino-acid sequence, 187 residues long: NDERRFADGQQDYTGWMDFGRRDDEDDVNERDVRGFGSFLGKALKAALKIGANALGGSPQQREANDERRFADGQQDYTGWMDFGRRDDEDDVNERDVRGFGSFLGKALKAALKIGANALGGSLQQREVNDERRFADGQQDYTGWMDFGRRDGQQDYTGWMDFGRRDDEDDVHERDVRGFGSFLGKAL.

A propeptide spanning residues 1–9 (NDERRFADG) is cleaved from the precursor. A disordered region spans residues 1–21 (NDERRFADGQQDYTGWMDFGR). A Sulfotyrosine modification is found at tyrosine 13. At phenylalanine 19 the chain carries Phenylalanine amide. A propeptide spanning residues 23 to 73 (DDEDDVNERDVRGFGSFLGKALKAALKIGANALGGSPQQREANDERRFADG) is cleaved from the precursor. Tyrosine 77 is subject to Sulfotyrosine. At phenylalanine 83 the chain carries Phenylalanine amide. The propeptide occupies 87–137 (DDEDDVNERDVRGFGSFLGKALKAALKIGANALGGSLQQREVNDERRFADG). A Sulfotyrosine modification is found at tyrosine 141. The residue at position 147 (phenylalanine 147) is a Phenylalanine amide. Positions 151 to 152 (DG) are excised as a propeptide. At tyrosine 156 the chain carries Sulfotyrosine. A Phenylalanine amide modification is found at phenylalanine 162. Positions 166-187 (DDEDDVHERDVRGFGSFLGKAL) are excised as a propeptide.

The protein belongs to the gastrin/cholecystokinin family. In terms of tissue distribution, expressed by the skin glands.

It localises to the secreted. The pharmacological activities of caerulein are quite similar to the physiological activities of gastrin and related peptides. This is Preprocaerulein clone PXC202 from Xenopus laevis (African clawed frog).